Consider the following 254-residue polypeptide: 3-oxo-5-alpha-steroid 4-dehydrogenase 2 (254 aa).

A run of 4 helical transmembrane segments spans residues 8–28 (SPVL…LYFA), 72–92 (PRSL…AHYF), 146–166 (FSLG…SDYI), and 206–226 (LATW…FLGL).

The protein belongs to the steroid 5-alpha reductase family.

The protein resides in the microsome membrane. The protein localises to the endoplasmic reticulum membrane. The catalysed reaction is a 3-oxo-5alpha-steroid + NADP(+) = a 3-oxo-Delta(4)-steroid + NADPH + H(+). It carries out the reaction 17beta-hydroxy-5alpha-androstan-3-one + NADP(+) = testosterone + NADPH + H(+). The enzyme catalyses 5alpha-pregnane-3,20-dione + NADP(+) = progesterone + NADPH + H(+). Functionally, converts testosterone (T) into 5-alpha-dihydrotestosterone (DHT) and progesterone or corticosterone into their corresponding 5-alpha-3-oxosteroids. It plays a central role in sexual differentiation and androgen physiology. The polypeptide is 3-oxo-5-alpha-steroid 4-dehydrogenase 2 (SRD5A2) (Sus scrofa (Pig)).